Reading from the N-terminus, the 843-residue chain is Glycogen phosphorylase, brain form (843 aa).

Residue A2 is modified to N-acetylalanine. S15 is subject to Phosphoserine; by PHK; in form phosphorylase A. AMP-binding residues include D43, Y197, and R310. Phosphotyrosine is present on Y197. The residue at position 473 (Y473) is a Phosphotyrosine. K569 provides a ligand contact to pyridoxal 5'-phosphate. The tract at residues 677 to 678 (TG) is pyridoxal 5'-phosphate. N6-(pyridoxal phosphate)lysine is present on K681.

The protein belongs to the glycogen phosphorylase family. In terms of assembly, homodimer. Dimers associate into a tetramer to form the enzymatically active phosphorylase A. The cofactor is pyridoxal 5'-phosphate. Phosphorylated. Phosphorylation of Ser-15 converts phosphorylase B (unphosphorylated) to phosphorylase A.

The enzyme catalyses [(1-&gt;4)-alpha-D-glucosyl](n) + phosphate = [(1-&gt;4)-alpha-D-glucosyl](n-1) + alpha-D-glucose 1-phosphate. With respect to regulation, activity of phosphorylase is controlled both by allosteric means (through the non-covalent binding of metabolites) and by covalent modification. Thus AMP allosterically activates, whereas ATP, ADP, and glucose-6-phosphate allosterically inhibit, phosphorylase B. Activated upon phosphorylation. Glycogen phosphorylase that regulates glycogen mobilization. Phosphorylase is an important allosteric enzyme in carbohydrate metabolism. Enzymes from different sources differ in their regulatory mechanisms and in their natural substrates. However, all known phosphorylases share catalytic and structural properties. The protein is Glycogen phosphorylase, brain form of Homo sapiens (Human).